A 472-amino-acid polypeptide reads, in one-letter code: Ribosomal RNA small subunit methyltransferase F (472 aa).

Residues 123–129 (AAAPGSK), Glu-147, Asp-174, and Asp-192 each bind S-adenosyl-L-methionine. Cys-245 (nucleophile) is an active-site residue.

The protein belongs to the class I-like SAM-binding methyltransferase superfamily. RsmB/NOP family.

The protein resides in the cytoplasm. It carries out the reaction cytidine(1407) in 16S rRNA + S-adenosyl-L-methionine = 5-methylcytidine(1407) in 16S rRNA + S-adenosyl-L-homocysteine + H(+). Functionally, specifically methylates the cytosine at position 1407 (m5C1407) of 16S rRNA. This is Ribosomal RNA small subunit methyltransferase F from Vibrio vulnificus (strain CMCP6).